The chain runs to 342 residues: Dihydroorotate dehydrogenase (quinone) (342 aa).

Residues 61 to 65 (AGLDK) and Thr-85 contribute to the FMN site. Residue Lys-65 coordinates substrate. 110-114 (NRMGF) lines the substrate pocket. FMN-binding residues include Asn-138 and Asn-171. Asn-171 contacts substrate. Ser-174 (nucleophile) is an active-site residue. A substrate-binding site is contributed by Asn-176. Positions 216 and 244 each coordinate FMN. 245–246 (NT) serves as a coordination point for substrate. FMN is bound by residues Gly-267, Gly-296, and 317-318 (YS).

This sequence belongs to the dihydroorotate dehydrogenase family. Type 2 subfamily. Monomer. The cofactor is FMN.

It localises to the cell membrane. It catalyses the reaction (S)-dihydroorotate + a quinone = orotate + a quinol. It participates in pyrimidine metabolism; UMP biosynthesis via de novo pathway; orotate from (S)-dihydroorotate (quinone route): step 1/1. Catalyzes the conversion of dihydroorotate to orotate with quinone as electron acceptor. This is Dihydroorotate dehydrogenase (quinone) from Pseudomonas paraeruginosa (strain DSM 24068 / PA7) (Pseudomonas aeruginosa (strain PA7)).